The chain runs to 578 residues: DNA primase (578 aa).

The CHC2-type zinc-finger motif lies at 40 to 64; that stretch reads CPFHQEKTPSFTVNFEKQFYFCFGC. A Toprim domain is found at 257 to 339; sequence KQILIVEGYV…GKNVKFIFLP (83 aa). 3 residues coordinate Mg(2+): Glu-263, Asp-307, and Asp-309.

Belongs to the DnaG primase family. In terms of assembly, monomer. Interacts with DnaB. Zn(2+) is required as a cofactor. The cofactor is Mg(2+).

It carries out the reaction ssDNA + n NTP = ssDNA/pppN(pN)n-1 hybrid + (n-1) diphosphate.. In terms of biological role, RNA polymerase that catalyzes the synthesis of short RNA molecules used as primers for DNA polymerase during DNA replication. In Buchnera aphidicola subsp. Baizongia pistaciae (strain Bp), this protein is DNA primase.